The following is a 148-amino-acid chain: General odorant-binding protein 69a (148 aa).

The N-terminal stretch at 1–23 is a signal peptide; sequence MVARHFSFFLALLILYDLIPSNQ. 3 disulfide bridges follow: Cys-42-Cys-74, Cys-70-Cys-121, and Cys-112-Cys-130.

It belongs to the PBP/GOBP family. As to expression, expressed in the antenna, mostly on the anterior surface of the third antennal segment. Expressed in auxiliary cells and the third antennal segment and exported to the sensillar lymph (at protein level).

The protein resides in the secreted. In terms of biological role, odorant-binding protein required for olfactory behavior and activity of pheromone-sensitive neurons in response to the male-specific pheromone cis-vaccenyl acetate (cVA). Modulates social responsivity differently in males and females, regulating male aggression and female receptivity respectively. The sequence is that of General odorant-binding protein 69a (Obp69a) from Drosophila melanogaster (Fruit fly).